Consider the following 61-residue polypeptide: UPF0434 protein Bpet2671 (61 aa).

It belongs to the UPF0434 family.

The sequence is that of UPF0434 protein Bpet2671 from Bordetella petrii (strain ATCC BAA-461 / DSM 12804 / CCUG 43448).